The sequence spans 276 residues: Rhomboid protease GlpG (276 aa).

6 consecutive transmembrane segments (helical) span residues 94-114 (GPVT…MQIL), 142-162 (ALMH…WYLG), 169-189 (LGSG…GYVQ), 192-212 (FSGP…GYVW), 229-249 (LIIF…GMSM), and 250-270 (ANGA…VDSL). S201 functions as the Nucleophile in the catalytic mechanism. H254 is an active-site residue.

It belongs to the peptidase S54 family.

It localises to the cell inner membrane. It carries out the reaction Cleaves type-1 transmembrane domains using a catalytic dyad composed of serine and histidine that are contributed by different transmembrane domains.. Rhomboid-type serine protease that catalyzes intramembrane proteolysis. The chain is Rhomboid protease GlpG from Escherichia coli O45:K1 (strain S88 / ExPEC).